We begin with the raw amino-acid sequence, 313 residues long: GTPase Era (313 aa).

In terms of domain architecture, Era-type G spans Arg-20 to Glu-187. The G1 stretch occupies residues Gly-28–Ser-35. Residue Gly-28–Ser-35 participates in GTP binding. Residues Gln-54–Ala-58 are G2. The G3 stretch occupies residues Asp-75 to Gly-78. GTP-binding positions include Asp-75–Ile-79 and Asn-137–Asp-140. Residues Asn-137–Asp-140 form a G4 region. Positions Ile-166 to Ala-168 are G5. A KH type-2 domain is found at Leu-218–Glu-295.

Belongs to the TRAFAC class TrmE-Era-EngA-EngB-Septin-like GTPase superfamily. Era GTPase family. Monomer.

It localises to the cytoplasm. The protein resides in the cell inner membrane. Functionally, an essential GTPase that binds both GDP and GTP, with rapid nucleotide exchange. Plays a role in 16S rRNA processing and 30S ribosomal subunit biogenesis and possibly also in cell cycle regulation and energy metabolism. In Rhizobium meliloti (strain 1021) (Ensifer meliloti), this protein is GTPase Era.